The sequence spans 424 residues: Glutamate-1-semialdehyde 2,1-aminomutase (424 aa).

At Lys265 the chain carries N6-(pyridoxal phosphate)lysine.

It belongs to the class-III pyridoxal-phosphate-dependent aminotransferase family. HemL subfamily. As to quaternary structure, homodimer. Pyridoxal 5'-phosphate is required as a cofactor.

It localises to the cytoplasm. The catalysed reaction is (S)-4-amino-5-oxopentanoate = 5-aminolevulinate. It participates in porphyrin-containing compound metabolism; protoporphyrin-IX biosynthesis; 5-aminolevulinate from L-glutamyl-tRNA(Glu): step 2/2. The protein is Glutamate-1-semialdehyde 2,1-aminomutase of Alkaliphilus oremlandii (strain OhILAs) (Clostridium oremlandii (strain OhILAs)).